A 169-amino-acid chain; its full sequence is Ribosome maturation factor RimM (169 aa).

The PRC barrel domain occupies 97–169 (EDEYYWTDLV…IITADWGLDY (73 aa)).

Belongs to the RimM family. In terms of assembly, binds ribosomal protein uS19.

The protein localises to the cytoplasm. An accessory protein needed during the final step in the assembly of 30S ribosomal subunit, possibly for assembly of the head region. Essential for efficient processing of 16S rRNA. May be needed both before and after RbfA during the maturation of 16S rRNA. It has affinity for free ribosomal 30S subunits but not for 70S ribosomes. The chain is Ribosome maturation factor RimM from Neisseria meningitidis serogroup C / serotype 2a (strain ATCC 700532 / DSM 15464 / FAM18).